The primary structure comprises 306 residues: N-acetylmuramic acid 6-phosphate etherase (306 aa).

In terms of domain architecture, SIS spans 59–222 (TSQALAKGGR…STGTMVMLGK (164 aa)). Glu-87 serves as the catalytic Proton donor. Glu-118 is an active-site residue.

Belongs to the GCKR-like family. MurNAc-6-P etherase subfamily. In terms of assembly, homodimer.

The enzyme catalyses N-acetyl-D-muramate 6-phosphate + H2O = N-acetyl-D-glucosamine 6-phosphate + (R)-lactate. It participates in amino-sugar metabolism; N-acetylmuramate degradation. In terms of biological role, specifically catalyzes the cleavage of the D-lactyl ether substituent of MurNAc 6-phosphate, producing GlcNAc 6-phosphate and D-lactate. This is N-acetylmuramic acid 6-phosphate etherase from Microcystis aeruginosa (strain NIES-843 / IAM M-2473).